The sequence spans 727 residues: Cyclin-T1 (727 aa).

Ser117 carries the post-translational modification Phosphoserine. A Nuclear localization signal motif is present at residues 253 to 270 (KRIWNWRAWQADRKTKAD). Lys343 participates in a covalent cross-link: Glycyl lysine isopeptide (Lys-Gly) (interchain with G-Cter in SUMO2). Residue Ser389 is modified to Phosphoserine. The stretch at 389–420 (SLKEYRAKHAEELAAQKRQLENMEANVKSQYA) forms a coiled coil. Lys391 carries the post-translational modification N6-acetyllysine. Lys416 participates in a covalent cross-link: Glycyl lysine isopeptide (Lys-Gly) (interchain with G-Cter in SUMO2). Ser417 and Ser475 each carry ADP-ribosylserine. The histidine-rich domain (HRD) stretch occupies residues 481-551 (IKMRIKVHTA…RLGDPKHSSQ (71 aa)). Lys482 participates in a covalent cross-link: Glycyl lysine isopeptide (Lys-Gly) (interchain with G-Cter in SUMO2). Lys486 is modified (N6-(ADP-ribosyl)lysine). Basic and acidic residues predominate over residues 487-507 (VHTAADKHNSVDDSVTKNREH). Disordered stretches follow at residues 487-631 (VHTA…QPSC) and 691-727 (YMNP…PLPK). ADP-ribosylhistidine is present on His488. Ser496 and Ser500 each carry phosphoserine. Residues 508 to 531 (KEKHKTHPSNHHHHHNHHSHKHSH) show a composition bias toward basic residues. Residue His531 is modified to ADP-ribosylhistidine. An ADP-ribosylserine mark is found at Ser532, Ser550, and Ser553. His557 carries the post-translational modification ADP-ribosylhistidine. The segment covering 561 to 571 (SLSSSFSSSSS) has biased composition (low complexity). Ser564 bears the ADP-ribosylserine mark. Ser565 is subject to Phosphoserine. Positions 616 to 631 (GHSSDTSGLHFSQPSC) are enriched in polar residues. Residues 711–727 (PPPLPSEPPPPLPPLPK) show a composition bias toward pro residues.

This sequence belongs to the cyclin family. Cyclin C subfamily. As to quaternary structure, cyclin-T1 is the predominant cyclin that associates with CDK9 to form a heterodimer called P-TEFb. P-TEFb forms a complex with AFF4/AF5Q31. Component of a complex which is at least composed of HTATSF1/Tat-SF1, P-TEFb complex, RNA pol II, SUPT5H, and NCL/nucleolin. Component of the 7SK snRNP complex at least composed of P-TEFb (composed of CDK9 and CCNT1/cyclin-T1), HEXIM1, HEXIM2, BCDIN3, SART3 proteins and 7SK and U6 snRNAs. Interacts (via central region) with ZMYND8 (via N-terminus); the interaction is direct and the association appears to occur between homodimeric ZMYND8 and the activated form of the P-TEFb complex. Interacts with BRD4, targets chromatin binding. Interacts with JMJD6. Interacts with MDFIC. Interacts with HSF1. Interacts with HTATSF1. Interacts with TBX21. In terms of assembly, (Microbial infection) Binds to BIV Tat, however Tat binds TAR RNA in a Cyc-T1-independent mode. ADP-ribosylation on serine residues by PARP1 in response to DNA damage disrupts the phase separation activity of CCNT1, thereby preventing activation of CDK9.

It is found in the nucleus. Regulatory subunit of the cyclin-dependent kinase pair (CDK9/cyclin-T1) complex, also called positive transcription elongation factor B (P-TEFb), which facilitates the transition from abortive to productive elongation by phosphorylating the CTD (C-terminal domain) of the large subunit of RNA polymerase II (RNA Pol II). Required to activate the protein kinase activity of CDK9: acts by mediating formation of liquid-liquid phase separation (LLPS) that enhances binding of P-TEFb to the CTD of RNA Pol II. In Bos taurus (Bovine), this protein is Cyclin-T1 (CCNT1).